A 157-amino-acid polypeptide reads, in one-letter code: MEGKGFTEEQEALVVKSWNEMKKNSQELGLKFFKKILEIAPAAQQLFSFLKDSTVPLEENPKLKPHAMAVFVMTCESAVQLRKAGKVTVRESNLKRLGATHFKAGVAAEHFEVTKLALLETIKEAVPEMWSPAMKNAWEEAHDQLAEAIKSEMKPSD.

The Globin domain occupies 5–154; that stretch reads GFTEEQEALV…LAEAIKSEMK (150 aa). The Homodimerization motif lies at 38-42; it reads EIAPA. 6 residues coordinate heme b: Ser48, Lys62, His66, Arg96, Thr100, and His101. Positions 108–120 match the Homodimerization motif; the sequence is AEHFEVTKLALLE.

This sequence belongs to the plant globin family. In terms of assembly, homodimer. It depends on heme b as a cofactor. In terms of tissue distribution, predominantly expressed in leaves, to a lower extent in roots, and barely in stems, flowers and seeds.

The protein resides in the cytoplasm. Its subcellular location is the nucleus. It carries out the reaction Fe(III)-heme b-[protein] + nitric oxide + H2O = Fe(II)-heme b-[protein] + nitrite + 2 H(+). Functionally, phytoglobin that reduces nitrite to nitric oxide (NO) under anoxic conditions (e.g. during flooding or in waterlogged soil) and upon root nodulation. Required for general plant development and during nodulation, especially for the onset of symbiosis. Monitors nitric oxide (NO) levels during early phase of the nitrogen-fixing symbiosis and buffers oxygen in functioning nodules. May not function as an oxygen storage or transport protein. Has an unusually high affinity for O(2) through a hexacoordinate heme iron because of a very low dissociation constant. Involved in water stress tolerance. This is Anaerobic nitrite reductase Hb1 from Glycine max (Soybean).